The chain runs to 389 residues: Succinate--CoA ligase [ADP-forming] subunit beta (389 aa).

An ATP-grasp domain is found at 9–236; it reads RDMFEAHGVP…KDSADPLEAK (228 aa). Residues Lys45, 52-54, Ala94, and Glu99 contribute to the ATP site; that span reads GRG. Mg(2+) is bound by residues Asn191 and Asp205. Substrate contacts are provided by residues Asn256 and 318–320; that span reads GIT.

It belongs to the succinate/malate CoA ligase beta subunit family. As to quaternary structure, heterotetramer of two alpha and two beta subunits. Mg(2+) is required as a cofactor.

The enzyme catalyses succinate + ATP + CoA = succinyl-CoA + ADP + phosphate. The catalysed reaction is GTP + succinate + CoA = succinyl-CoA + GDP + phosphate. It functions in the pathway carbohydrate metabolism; tricarboxylic acid cycle; succinate from succinyl-CoA (ligase route): step 1/1. Succinyl-CoA synthetase functions in the citric acid cycle (TCA), coupling the hydrolysis of succinyl-CoA to the synthesis of either ATP or GTP and thus represents the only step of substrate-level phosphorylation in the TCA. The beta subunit provides nucleotide specificity of the enzyme and binds the substrate succinate, while the binding sites for coenzyme A and phosphate are found in the alpha subunit. This is Succinate--CoA ligase [ADP-forming] subunit beta from Renibacterium salmoninarum (strain ATCC 33209 / DSM 20767 / JCM 11484 / NBRC 15589 / NCIMB 2235).